We begin with the raw amino-acid sequence, 447 residues long: Neuronal acetylcholine receptor subunit alpha-10 (447 aa).

The first 24 residues, 1–24 (MGTRSHYLDLGFLLLLFLPAECLG), serve as a signal peptide directing secretion. Topologically, residues 25 to 237 (AEGRLAHKLF…FTLLLRRRAA (213 aa)) are extracellular. N-linked (GlcNAc...) asparagine glycans are attached at residues asparagine 40 and asparagine 56. Cystine bridges form between cysteine 154–cysteine 168 and cysteine 218–cysteine 219. The next 3 membrane-spanning stretches (helical) occupy residues 238–258 (AYVC…PLAF), 268–288 (VSLG…LAES), and 302–322 (YMAT…IMNL). At 323 to 425 (HYCGPNAHPV…WKRLARVMDR (103 aa)) the chain is on the cytoplasmic side. A helical transmembrane segment spans residues 426–446 (FFLGIFFCMALVMSLIVLVQA).

It belongs to the ligand-gated ion channel (TC 1.A.9) family. Acetylcholine receptor (TC 1.A.9.1) subfamily. Alpha-10/CHRNA10 sub-subfamily. In terms of assembly, forms homo- or heterooligomeric channels in conjunction with CHRNA10. The native outer hair cell receptor may be composed of CHRNA9:CHRNA10 heterooligomers. Found in the stoichiometric form (CHRNA9)2:(CHRNA10)3. As to expression, expressed in the outer hair cells of the cochlea and the neurons of dorsal root ganglia.

It localises to the synaptic cell membrane. Its subcellular location is the cell membrane. The enzyme catalyses Ca(2+)(in) = Ca(2+)(out). The catalysed reaction is Mg(2+)(in) = Mg(2+)(out). It catalyses the reaction K(+)(in) = K(+)(out). It carries out the reaction Na(+)(in) = Na(+)(out). With respect to regulation, activated by a myriad of ligands such as acetylcholine. AChR activity is inhibited by the antagonist alpha-conotoxins RgIA and GeXXA, small disulfide-constrained peptides from cone snails. Its function is as follows. Component of neuronal acetylcholine receptors (nAChRs) that function as pentameric, ligand-gated cation channels with high calcium permeability among other activities. nAChRs are excitatory neurotrasnmitter receptors formed by a collection of nAChR subunits known to mediate synaptic transmission in the nervous system and the neuromuscular junction. Each nAchR subunit confers differential attributes to channel properties, including activation, deactivation and desensitization kinetics, pH sensitivity, cation permeability, and binding to allosteric modulators. Forms heteropentamers with CHRNA9. Expressed in the inner ear, in sympathetic neurons and in other non-neuronal cells, such as skin keratinocytes and lymphocytes. nAChR formed by CHRNA9:CHRNA10 mediate central nervous system control of auditory and vestibular sensory processing. The channel is permeable to a range of divalent cations including calcium, the influx of which may activate a potassium current which hyperpolarizes the cell membrane. In the ear, mediates synaptic transmission between efferent olivocochlear fibers and hair cells of the cochlea, this may lead to a reduction in basilar membrane motion, altering the activity of auditory nerve fibers and reducing the range of dynamic hearing. This may protect against acoustic trauma. May also regulate keratinocyte adhesion. The polypeptide is Neuronal acetylcholine receptor subunit alpha-10 (Chrna10) (Rattus norvegicus (Rat)).